Reading from the N-terminus, the 702-residue chain is Putative methyltransferase NSUN7 (702 aa).

Residue Cys424 is the Nucleophile of the active site. Disordered stretches follow at residues 522–541, 567–593, and 675–702; these read KSSK…TKAA, ETVT…KHKL, and PTPS…RRWL. Residues 523–534 are compositionally biased toward basic residues; that stretch reads SSKREKKKKKSK. The span at 567–587 shows a compositional bias: polar residues; that stretch reads ETVTKPSLPQKNTAQVGASSQ. Over residues 681–691 the composition is skewed to basic and acidic residues; that stretch reads RKGEKPKDDTR.

Belongs to the class I-like SAM-binding methyltransferase superfamily. RsmB/NOP family.

Functionally, may have S-adenosyl-L-methionine-dependent methyl-transferase activity. In Macaca fascicularis (Crab-eating macaque), this protein is Putative methyltransferase NSUN7 (NSUN7).